The primary structure comprises 314 residues: Glycine--tRNA ligase alpha subunit (314 aa).

This sequence belongs to the class-II aminoacyl-tRNA synthetase family. Tetramer of two alpha and two beta subunits.

Its subcellular location is the cytoplasm. It carries out the reaction tRNA(Gly) + glycine + ATP = glycyl-tRNA(Gly) + AMP + diphosphate. The polypeptide is Glycine--tRNA ligase alpha subunit (Leuconostoc citreum (strain KM20)).